The sequence spans 112 residues: MNATILVKIITPLSIALEKQAKIVTMSGEEGMFGVLPSHVPMIVSLKAGLVQVYIDDMHKSENTYLISGGVTEVTANYINIATETAINVTNLSEAEIATKLLDLQKTLSDQH.

It belongs to the ATPase epsilon chain family. F-type ATPases have 2 components, CF(1) - the catalytic core - and CF(0) - the membrane proton channel. CF(1) has five subunits: alpha(3), beta(3), gamma(1), delta(1), epsilon(1). CF(0) has three main subunits: a, b and c.

The protein resides in the cell inner membrane. Its function is as follows. Produces ATP from ADP in the presence of a proton gradient across the membrane. This is ATP synthase epsilon chain from Rickettsia rickettsii (strain Sheila Smith).